The sequence spans 577 residues: Thiol:disulfide interchange protein DsbD (577 aa).

The N-terminal stretch at 1–23 (MAQRIFTLIFLLWTAVGTPQVAA) is a signal peptide. 2 disulfides stabilise this stretch: Cys-131-Cys-137 and Cys-194-Cys-316. Transmembrane regions (helical) follow at residues 182–202 (ALLI…YPLI), 225–245 (YVQG…AAGL), 255–275 (YILI…FGLY), 308–328 (LAGL…LLYI), 338–358 (GGTL…VTLF), 369–389 (WMQY…VFLL), and 396–416 (AWGI…ALML). Residues 437–577 (VISAKPLQDW…FQAHLQKFSP (141 aa)) enclose the Thioredoxin domain. A disulfide bond links Cys-492 and Cys-495.

It belongs to the thioredoxin family. DsbD subfamily.

It is found in the cell inner membrane. The catalysed reaction is [protein]-dithiol + NAD(+) = [protein]-disulfide + NADH + H(+). It carries out the reaction [protein]-dithiol + NADP(+) = [protein]-disulfide + NADPH + H(+). In terms of biological role, required to facilitate the formation of correct disulfide bonds in some periplasmic proteins and for the assembly of the periplasmic c-type cytochromes. Acts by transferring electrons from cytoplasmic thioredoxin to the periplasm. This transfer involves a cascade of disulfide bond formation and reduction steps. In Pectobacterium atrosepticum (strain SCRI 1043 / ATCC BAA-672) (Erwinia carotovora subsp. atroseptica), this protein is Thiol:disulfide interchange protein DsbD.